The following is a 142-amino-acid chain: Hemoglobin subunit zeta (142 aa).

N-acetylserine is present on Ser-2. The 141-residue stretch at 2–142 (SLTRTERTII…VSGVLTEKYR (141 aa)) folds into the Globin domain. A Phosphothreonine modification is found at Thr-29. Position 53 is a phosphoserine (Ser-53). A heme b-binding site is contributed by His-59. 2 positions are modified to phosphoserine: Ser-73 and Ser-82. His-88 provides a ligand contact to heme b.

It belongs to the globin family. Heterotetramer of two zeta chains and beta-type chains.

In terms of biological role, the zeta chain is an alpha-type chain of mammalian embryonic hemoglobin. The protein is Hemoglobin subunit zeta (HBZ1) of Capra hircus (Goat).